Here is a 349-residue protein sequence, read N- to C-terminus: Hydrophobic dipeptide epimerase (349 aa).

Substrate contacts are provided by residues Thr127 and 153-155 (KIK). Mg(2+) contacts are provided by Asp186, Glu212, and Asp237. Substrate-binding positions include Lys259 and 309–311 (DLD).

Belongs to the mandelate racemase/muconate lactonizing enzyme family. It depends on Mg(2+) as a cofactor.

Functionally, catalyzes the epimerization a variety of hydrophobic dipeptides. Epimerase activity is highest with L-Ala-L-Tyr, and lower with L-Ala-L-Met, L-Ala-L-Phe, L-Tyr-L-Ala, L-Tyr-L-Met and L-Tyr-L-Trp (in vitro). This is Hydrophobic dipeptide epimerase from Flavobacteria bacterium (strain MS024-2A).